Consider the following 182-residue polypeptide: MHLIVGLGNPGSQYELTHHNIGFITVDAICKYWGFQLFSKKADYLITSGMINDNKIMLIKPYSFMNNSGIPVAKIRNFYKLSLDNIVVIHDDADLELGRIKVKKGGSSAGHNGLKSIDSFIGNDYWRLRFGVGRPEDQRSLADYVLSKFSNFDNVTPLVEKIAKNIHLMLQGDNTAFINLIV.

Position 14 (Tyr-14) interacts with tRNA. His-19 acts as the Proton acceptor in catalysis. Phe-64, Asn-66, and Asn-112 together coordinate tRNA.

The protein belongs to the PTH family. Monomer.

Its subcellular location is the cytoplasm. It carries out the reaction an N-acyl-L-alpha-aminoacyl-tRNA + H2O = an N-acyl-L-amino acid + a tRNA + H(+). Hydrolyzes ribosome-free peptidyl-tRNAs (with 1 or more amino acids incorporated), which drop off the ribosome during protein synthesis, or as a result of ribosome stalling. Functionally, catalyzes the release of premature peptidyl moieties from peptidyl-tRNA molecules trapped in stalled 50S ribosomal subunits, and thus maintains levels of free tRNAs and 50S ribosomes. The polypeptide is Peptidyl-tRNA hydrolase (Wolbachia sp. subsp. Drosophila simulans (strain wRi)).